The following is a 112-amino-acid chain: uncharacterized protein (112 aa).

The segment covering 1–11 has biased composition (polar residues); sequence MAESVASSESL. Positions 1–32 are disordered; it reads MAESVASSESLPQMKPEEPESKKSPSREAIPK. Basic and acidic residues predominate over residues 15 to 31; the sequence is KPEEPESKKSPSREAIP. A helical transmembrane segment spans residues 81–101; sequence VVFIFMIAIMSMLVIGLVVCG.

The protein resides in the membrane. This is an uncharacterized protein from Encephalitozoon cuniculi (strain GB-M1) (Microsporidian parasite).